A 144-amino-acid chain; its full sequence is Peroxisome assembly protein 22 (144 aa).

Residues Tyr13–Ala35 traverse the membrane as a helical segment.

The protein belongs to the peroxin-22 family.

It is found in the peroxisome membrane. Involved in peroxisome biogenesis. The polypeptide is Peroxisome assembly protein 22 (PEX22) (Eremothecium gossypii (strain ATCC 10895 / CBS 109.51 / FGSC 9923 / NRRL Y-1056) (Yeast)).